A 398-amino-acid chain; its full sequence is Phosphoglycerate kinase (398 aa).

Residues 21–23, arginine 36, 59–62, arginine 119, and arginine 157 contribute to the substrate site; these read DFN and HLGR. ATP contacts are provided by residues lysine 208, glycine 296, glutamate 327, and 354 to 357; that span reads GGDS.

Belongs to the phosphoglycerate kinase family. Monomer.

Its subcellular location is the cytoplasm. It catalyses the reaction (2R)-3-phosphoglycerate + ATP = (2R)-3-phospho-glyceroyl phosphate + ADP. It functions in the pathway carbohydrate degradation; glycolysis; pyruvate from D-glyceraldehyde 3-phosphate: step 2/5. The protein is Phosphoglycerate kinase of Streptococcus pneumoniae (strain Taiwan19F-14).